The chain runs to 369 residues: MIALLILSLTCSVSTYRLQGFTNAGIVAYKNIQDDNIVFSPFGYSFSMFMSLLPASGNTRIELLKTMDLRKRDLGPAFTELISGLAKLKTSKYTYTDLTYQSFVDNTVCIKPSYYQQYHRFGLYRLNFRRDAVNKINSIVERRSGMSNVVDSNMLDNNTLWAIINTIYFKGIWQYPFDITKTRNASFTNKYGTKTVPMMNVVTKLQGNTITIDDEEYDMVRLPYKDANISMYLAIGDNMTHFTDSITAAKLDYWSFQLGNKVYNLKLPKFSIENKRDIKSIAEMMAPSMFNPDNASFKHMTRDPLYIYKMFQNAKIDVDEQGTVAEASTIMVATARSSPEKLEFNTPFVFIIRHDITGFILFMGKVESP.

The N-terminal stretch at methionine 1–threonine 15 is a signal peptide.

Belongs to the serpin family. Orthopoxvirus OPG040 subfamily. Interacts with OPG185/A56 protein.

The protein localises to the virion membrane. It is found in the host cell membrane. Its function is as follows. Negatively regulates superinfection and syncytium formation in infected host cells. Acts in concert with OPG185/A56 protein at the host cell membrane by interacting with and inhibiting the mature virion entry/fusion complex (EFC). This mechanism ensures that new virions released from the cell cannot enter already infected cells. This Vaccinia virus (strain Western Reserve) (VACV) protein is Superinfection exclusion protein (OPG040).